A 1464-amino-acid chain; its full sequence is DNA polymerase III PolC-type (1464 aa).

One can recognise an Exonuclease domain in the interval 426 to 582 (YVVFDVETTG…YDAEATGRLL (157 aa)).

Belongs to the DNA polymerase type-C family. PolC subfamily.

It is found in the cytoplasm. It carries out the reaction DNA(n) + a 2'-deoxyribonucleoside 5'-triphosphate = DNA(n+1) + diphosphate. Its function is as follows. Required for replicative DNA synthesis. This DNA polymerase also exhibits 3' to 5' exonuclease activity. In Streptococcus thermophilus (strain CNRZ 1066), this protein is DNA polymerase III PolC-type.